Consider the following 830-residue polypeptide: MAKFKRTDTNRSLENLLDQDKSAQMSKNGGSLAKQPTRKLIPGHGLEFNNLSYSVIKKVKKDGVWINKEAYLLNDISGQALRGEIMAIMGPSGAGKSTFLDALAGRIARGSLEGTVRIDGKPVTTSYMKMISSYVMQDDQLFPMLTVFETFMFAAEVRLPPSISRAEKKKRVHELLEQLGLTSATHTYIGDEGRRGVSGGERRRVSIGIDIIHKPSLLFLDEPTSGLDSTSAFSVVEKVKDIAKSGSIVLMTIHQPSFRIQMLLDRITVLARGRLVYLGSPTGVAAFLAGFARPVPDGENSLEYLLDVIKEYDESTVGLDPLVLYQRDGIKPDQAAKTPVRKPPKTPKIPRTPYAKSPWTKHISLKSSHFSTGNMNSQRDPKDHSDQQSDVNNFDYEDDDDEDEFDKSLERRAPHTPMSMQSGVYPRLASHFYKDFSVWLYNGVKGTPRRPPTWNNNGAIKAPISGSGFKSMSSSQFSMTQQTPGPGNKTPIFTPGRDVIEYSSYNPSYEEVFEIEEVLDEPVHRHKFANPWVREVLVLSWRTTLNVIRTPELFLSREIVLTVMGLVLSSFFKKLSHFDFKTINHLLNFYIFTICLVFFSSNDAVPTFIQERFIFIRETSHNAYRASSYVISSLIVYLPFFAIQGFTFAGITQYILHLNSSILSFWLILYSSLVTSNAYVMLVSALVPSYITGYAVVIATTALFFLTCGFFLKRTQIPLVWRWLHYISAIKYPFEALLINEFKGSKHCYDGDLSDLSPGPLGDVKFSALRNNSRAALPQNCTLIGEDVLFSMDIREENIWLDIVILLAWGVLYRLFFYVVLRFYSKNERK.

Residues 1-551 (MAKFKRTDTN…RTTLNVIRTP (551 aa)) lie on the Cytoplasmic side of the membrane. The ABC transporter domain maps to 46–297 (LEFNNLSYSV…LAGFARPVPD (252 aa)). Position 90–97 (90–97 (GPSGAGKS)) interacts with ATP. Disordered stretches follow at residues 333–356 (DQAA…PYAK), 368–422 (SHFS…SMQS), and 471–491 (SMSS…NKTP). A compositionally biased stretch (polar residues) spans 368–378 (SHFSTGNMNSQ). Acidic residues predominate over residues 395–405 (DYEDDDDEDEF). The segment covering 471-483 (SMSSSQFSMTQQT) has biased composition (low complexity). A helical transmembrane segment spans residues 552–572 (ELFLSREIVLTVMGLVLSSFF). The Extracellular segment spans residues 573-588 (KKLSHFDFKTINHLLN). A helical transmembrane segment spans residues 589 to 609 (FYIFTICLVFFSSNDAVPTFI). The Cytoplasmic segment spans residues 610 to 630 (QERFIFIRETSHNAYRASSYV). Residues 631-651 (ISSLIVYLPFFAIQGFTFAGI) form a helical membrane-spanning segment. At 652–661 (TQYILHLNSS) the chain is on the extracellular side. N-linked (GlcNAc...) asparagine glycosylation occurs at asparagine 659. Residues 662-682 (ILSFWLILYSSLVTSNAYVML) traverse the membrane as a helical segment. The Cytoplasmic portion of the chain corresponds to 683 to 690 (VSALVPSY). A helical membrane pass occupies residues 691–711 (ITGYAVVIATTALFFLTCGFF). The Extracellular segment spans residues 712–798 (LKRTQIPLVW…LFSMDIREEN (87 aa)). N-linked (GlcNAc...) asparagine glycosylation is found at asparagine 771 and asparagine 780. The chain crosses the membrane as a helical span at residues 799–819 (IWLDIVILLAWGVLYRLFFYV). The Cytoplasmic portion of the chain corresponds to 820 to 830 (VLRFYSKNERK).

Belongs to the ABC transporter superfamily. ABCG family. Stunted arbuscule (STR) subfamily. Heterodimerizes with STR2; the resulting transporter is located in the peri-arbuscular membrane.

The protein resides in the cell membrane. Functionally, together with STR2, required for arbuscule development in arbuscular mycorrhizal (AM) symbiosis. In Petunia hybrida (Petunia), this protein is ABC transporter G family member STR.